The sequence spans 117 residues: Photosystem II reaction center Psb28 protein (117 aa).

It belongs to the Psb28 family. In terms of assembly, part of the photosystem II complex.

It is found in the cellular thylakoid membrane. The sequence is that of Photosystem II reaction center Psb28 protein from Prochlorococcus marinus subsp. pastoris (strain CCMP1986 / NIES-2087 / MED4).